The following is a 194-amino-acid chain: Peptidyl-tRNA hydrolase (194 aa).

Y16 is a binding site for tRNA. Catalysis depends on H21, which acts as the Proton acceptor. 3 residues coordinate tRNA: F67, N69, and N115.

The protein belongs to the PTH family. As to quaternary structure, monomer.

It is found in the cytoplasm. The catalysed reaction is an N-acyl-L-alpha-aminoacyl-tRNA + H2O = an N-acyl-L-amino acid + a tRNA + H(+). In terms of biological role, hydrolyzes ribosome-free peptidyl-tRNAs (with 1 or more amino acids incorporated), which drop off the ribosome during protein synthesis, or as a result of ribosome stalling. Catalyzes the release of premature peptidyl moieties from peptidyl-tRNA molecules trapped in stalled 50S ribosomal subunits, and thus maintains levels of free tRNAs and 50S ribosomes. The chain is Peptidyl-tRNA hydrolase from Shigella boydii serotype 18 (strain CDC 3083-94 / BS512).